Consider the following 143-residue polypeptide: MEKVKLGMVVAEFNRDITYMMEILGKEHAEFLGAEVSEVIRVPGTFDIPIAVKKMLEKGRVDAVVAIGCVIEGETEHDEIVAQHAARKIMDLSLEYGKPVTLGISGPGMGRIAATERVDYAKRAVEAAVKLVKRLKEYDAEGS.

5-amino-6-(D-ribitylamino)uracil contacts are provided by residues F13, T45–D47, and C69–I71. E74 to T75 serves as a coordination point for (2S)-2-hydroxy-3-oxobutyl phosphate. Catalysis depends on H77, which acts as the Proton donor. L102 contacts 5-amino-6-(D-ribitylamino)uracil. R117 contributes to the (2S)-2-hydroxy-3-oxobutyl phosphate binding site.

This sequence belongs to the DMRL synthase family.

It catalyses the reaction (2S)-2-hydroxy-3-oxobutyl phosphate + 5-amino-6-(D-ribitylamino)uracil = 6,7-dimethyl-8-(1-D-ribityl)lumazine + phosphate + 2 H2O + H(+). Its pathway is cofactor biosynthesis; riboflavin biosynthesis; riboflavin from 2-hydroxy-3-oxobutyl phosphate and 5-amino-6-(D-ribitylamino)uracil: step 1/2. Catalyzes the formation of 6,7-dimethyl-8-ribityllumazine by condensation of 5-amino-6-(D-ribitylamino)uracil with 3,4-dihydroxy-2-butanone 4-phosphate. This is the penultimate step in the biosynthesis of riboflavin. The sequence is that of 6,7-dimethyl-8-ribityllumazine synthase from Archaeoglobus fulgidus (strain ATCC 49558 / DSM 4304 / JCM 9628 / NBRC 100126 / VC-16).